Here is a 411-residue protein sequence, read N- to C-terminus: Ubiquitin-binding protein CUE5 (411 aa).

Residues 1-12 (MEEKEGIKDSSL) are compositionally biased toward basic and acidic residues. Disordered stretches follow at residues 1–102 (MEEK…NPIL) and 142–411 (ESGK…DDEM). Residue lysine 15 forms a Glycyl lysine isopeptide (Lys-Gly) (interchain with G-Cter in ubiquitin) linkage. Serine 21 and serine 36 each carry phosphoserine. Positions 25 to 58 (DISKTTDVDLNSDGKKDNDTSAKDGTPKVEEKVN) are enriched in basic and acidic residues. Residue lysine 59 forms a Glycyl lysine isopeptide (Lys-Gly) (interchain with G-Cter in ubiquitin) linkage. A Phosphothreonine modification is found at threonine 70. A Glycyl lysine isopeptide (Lys-Gly) (interchain with G-Cter in ubiquitin) cross-link involves residue lysine 76. At serine 91 the chain carries Phosphoserine. In terms of domain architecture, CUE spans 97-140 (KENPILQELKDAFPNLEEKYIKAVIIASQGVLSPAFNALLFLSD). Lysine 156 is covalently cross-linked (Glycyl lysine isopeptide (Lys-Gly) (interchain with G-Cter in ubiquitin)). A Phosphothreonine modification is found at threonine 167. Residues 209-219 (NPNEREQHHED) show a composition bias toward basic and acidic residues. Phosphoserine is present on serine 220. Basic and acidic residues predominate over residues 230-242 (VEKDLPELTDRAG). Positions 245 to 256 (LQDTANKVSNWI) are enriched in polar residues. Phosphoserine occurs at positions 309 and 318. Threonine 346 carries the post-translational modification Phosphothreonine. The residue at position 348 (serine 348) is a Phosphoserine. Threonine 352 carries the phosphothreonine modification. Lysine 354 participates in a covalent cross-link: Glycyl lysine isopeptide (Lys-Gly) (interchain with G-Cter in ubiquitin). Threonine 364 and threonine 367 each carry phosphothreonine. An AIM motif is present at residues 373-376 (WQPL). Lysine 396 participates in a covalent cross-link: Glycyl lysine isopeptide (Lys-Gly) (interchain with G-Cter in ubiquitin). Acidic residues predominate over residues 399–411 (DEDEFLINSDDEM). Serine 407 is modified (phosphoserine).

As to quaternary structure, interacts with ATG8 (via AIM motif), CLB2, and ubiquitin (via CUE domain).

Its subcellular location is the cytoplasm. Functionally, connects the ubiquitin pathway to autophagy by functioning as a ubiquitin-ATG8 adapter and thus mediating autophagic clearance of ubiquitin conjugates under starvation conditions. The CUE5-dependent selective autophagy pathway plays an important role in clearance of cytotoxic protein aggregates. Not required for cytoplasmic to vacuole pathway (cvt), mitophagy, pexophagy, or ribophagy. The polypeptide is Ubiquitin-binding protein CUE5 (Saccharomyces cerevisiae (strain ATCC 204508 / S288c) (Baker's yeast)).